The chain runs to 293 residues: 4-hydroxy-tetrahydrodipicolinate synthase (293 aa).

Thr-44 is a binding site for pyruvate. Residue Tyr-132 is the Proton donor/acceptor of the active site. Lys-161 acts as the Schiff-base intermediate with substrate in catalysis. Ile-203 contributes to the pyruvate binding site.

The protein belongs to the DapA family. Homotetramer; dimer of dimers.

It localises to the cytoplasm. It catalyses the reaction L-aspartate 4-semialdehyde + pyruvate = (2S,4S)-4-hydroxy-2,3,4,5-tetrahydrodipicolinate + H2O + H(+). It participates in amino-acid biosynthesis; L-lysine biosynthesis via DAP pathway; (S)-tetrahydrodipicolinate from L-aspartate: step 3/4. Its function is as follows. Catalyzes the condensation of (S)-aspartate-beta-semialdehyde [(S)-ASA] and pyruvate to 4-hydroxy-tetrahydrodipicolinate (HTPA). The protein is 4-hydroxy-tetrahydrodipicolinate synthase of Persephonella marina (strain DSM 14350 / EX-H1).